Here is a 246-residue protein sequence, read N- to C-terminus: UDP-N-acetyl-D-mannosaminuronic acid transferase (246 aa).

It belongs to the glycosyltransferase 26 family.

It carries out the reaction UDP-N-acetyl-alpha-D-mannosaminouronate + N-acetyl-alpha-D-glucosaminyl-di-trans,octa-cis-undecaprenyl diphosphate = beta-D-ManNAcA-(1-&gt;4)-alpha-D-GlcNAc-di-trans,octa-cis-undecaprenyl diphosphate + UDP + H(+). It functions in the pathway bacterial outer membrane biogenesis; enterobacterial common antigen biosynthesis. Functionally, catalyzes the synthesis of Und-PP-GlcNAc-ManNAcA (Lipid II), the second lipid-linked intermediate involved in enterobacterial common antigen (ECA) synthesis. The sequence is that of UDP-N-acetyl-D-mannosaminuronic acid transferase from Citrobacter koseri (strain ATCC BAA-895 / CDC 4225-83 / SGSC4696).